The following is a 398-amino-acid chain: Argininosuccinate synthase (398 aa).

8–16 (AYSGGLDTS) contributes to the ATP binding site. Y87 contributes to the L-citrulline binding site. G117 contributes to the ATP binding site. T119, N123, and D124 together coordinate L-aspartate. N123 provides a ligand contact to L-citrulline. 4 residues coordinate L-citrulline: R127, S175, E259, and Y271.

The protein belongs to the argininosuccinate synthase family. Type 1 subfamily. As to quaternary structure, homotetramer.

The protein localises to the cytoplasm. It carries out the reaction L-citrulline + L-aspartate + ATP = 2-(N(omega)-L-arginino)succinate + AMP + diphosphate + H(+). It functions in the pathway amino-acid biosynthesis; L-arginine biosynthesis; L-arginine from L-ornithine and carbamoyl phosphate: step 2/3. This chain is Argininosuccinate synthase, found in Corynebacterium kroppenstedtii (strain DSM 44385 / JCM 11950 / CIP 105744 / CCUG 35717).